An 884-amino-acid polypeptide reads, in one-letter code: uncharacterized protein (884 aa).

This is an uncharacterized protein from Mycobacterium tuberculosis (strain ATCC 25618 / H37Rv).